Consider the following 197-residue polypeptide: Ribose 1,5-bisphosphate phosphokinase PhnN (197 aa).

Position 21–28 (21–28 (GPSGAGKD)) interacts with ATP.

Belongs to the ribose 1,5-bisphosphokinase family.

The enzyme catalyses alpha-D-ribose 1,5-bisphosphate + ATP = 5-phospho-alpha-D-ribose 1-diphosphate + ADP. Its pathway is metabolic intermediate biosynthesis; 5-phospho-alpha-D-ribose 1-diphosphate biosynthesis; 5-phospho-alpha-D-ribose 1-diphosphate from D-ribose 5-phosphate (route II): step 3/3. Functionally, catalyzes the phosphorylation of ribose 1,5-bisphosphate to 5-phospho-D-ribosyl alpha-1-diphosphate (PRPP). This chain is Ribose 1,5-bisphosphate phosphokinase PhnN, found in Rhizobium etli (strain CIAT 652).